The sequence spans 304 residues: Ribonuclease Z (304 aa).

Zn(2+) contacts are provided by histidine 61, histidine 63, aspartate 65, histidine 66, histidine 138, aspartate 206, and histidine 265. The Proton acceptor role is filled by aspartate 65.

The protein belongs to the RNase Z family. Homodimer. Zn(2+) serves as cofactor.

The enzyme catalyses Endonucleolytic cleavage of RNA, removing extra 3' nucleotides from tRNA precursor, generating 3' termini of tRNAs. A 3'-hydroxy group is left at the tRNA terminus and a 5'-phosphoryl group is left at the trailer molecule.. Zinc phosphodiesterase, which displays some tRNA 3'-processing endonuclease activity. Probably involved in tRNA maturation, by removing a 3'-trailer from precursor tRNA. This chain is Ribonuclease Z, found in Lachnoclostridium phytofermentans (strain ATCC 700394 / DSM 18823 / ISDg) (Clostridium phytofermentans).